Consider the following 1787-residue polypeptide: Chromodomain-helicase-DNA-binding protein 3 homolog (1787 aa).

Disordered regions lie at residues 1–80 and 170–258; these read MSDD…PDPY and PVTP…KEQG. A compositionally biased stretch (acidic residues) spans 10–43; sequence DGDETMEEDSMLAEGHEDGEEDVGEDEEEVETEE. Positions 56–71 are enriched in basic residues; that stretch reads PPPKKKKGGKKSSKKK. The span at 192 to 243 shows a compositional bias: basic and acidic residues; sequence DGSDGEGGGHDSDQEFEALIKQHEKQQDEAEKGKEEARINRAAAKVDKRKAA. 2 consecutive PHD-type zinc fingers follow at residues 265-312 and 328-375; these read QENC…CEEH and MDYC…CIIP. Chromo domains follow at residues 373-476 and 501-583; these read IIPE…STLS and MQIH…GPKE. Residues 628–812 enclose the Helicase ATP-binding domain; that stretch reads RHCWSNGTDA…FHLLNFLAPD (185 aa). 641-648 provides a ligand contact to ATP; it reads DEMGLGKT. A DEAH box motif is present at residues 763-766; it reads DEAH. The Helicase C-terminal domain occupies 944–1107; it reads LLQKMLRKLK…GKSMSKTELD (164 aa). 4 disordered regions span residues 1120 to 1141, 1186 to 1212, 1248 to 1295, and 1754 to 1787; these read EEEA…PNEQ, TKEA…QDPN, ENMG…EERS, and RASS…YPRY. Residues 1190 to 1199 show a composition bias toward acidic residues; the sequence is DDADDDEDET. The segment covering 1248–1261 has biased composition (polar residues); sequence ENMGQDWSAQNNQQ. The span at 1761-1773 shows a compositional bias: basic and acidic residues; sequence TKDEPMDTSDKDI.

Belongs to the SNF2/RAD54 helicase family. In terms of tissue distribution, expressed in the head and vulva.

The protein localises to the nucleus. It catalyses the reaction ATP + H2O = ADP + phosphate + H(+). In terms of biological role, ATP-dependent chromatin-remodeling factor that has a role in notch signaling-dependent vulval cell fate determination. May also have a role in pharyngeal precursor cell specification. This Caenorhabditis elegans protein is Chromodomain-helicase-DNA-binding protein 3 homolog (chd-3).